The chain runs to 193 residues: Peptidyl-tRNA hydrolase (193 aa).

Residue Tyr21 coordinates tRNA. The active-site Proton acceptor is His26. 3 residues coordinate tRNA: Tyr72, Asn74, and Asn120.

It belongs to the PTH family. As to quaternary structure, monomer.

It is found in the cytoplasm. The catalysed reaction is an N-acyl-L-alpha-aminoacyl-tRNA + H2O = an N-acyl-L-amino acid + a tRNA + H(+). Hydrolyzes ribosome-free peptidyl-tRNAs (with 1 or more amino acids incorporated), which drop off the ribosome during protein synthesis, or as a result of ribosome stalling. Its function is as follows. Catalyzes the release of premature peptidyl moieties from peptidyl-tRNA molecules trapped in stalled 50S ribosomal subunits, and thus maintains levels of free tRNAs and 50S ribosomes. The sequence is that of Peptidyl-tRNA hydrolase from Nocardia farcinica (strain IFM 10152).